The sequence spans 544 residues: 4-coumarate:CoA ligase 1 (544 aa).

It belongs to the ATP-dependent AMP-binding enzyme family. As to quaternary structure, monomer. As to expression, mostly expressed in flower organs, with highest levels in corollas, and, to a lesser extent, in tubes, sepals, pistils, stamen and ovaries. Also present at low levels in leaves.

It localises to the cytoplasm. It is found in the cytosol. It catalyses the reaction (E)-4-coumarate + ATP + CoA = (E)-4-coumaroyl-CoA + AMP + diphosphate. The catalysed reaction is (E)-caffeate + ATP + CoA = (E)-caffeoyl-CoA + AMP + diphosphate. It carries out the reaction benzoate + ATP + CoA = benzoyl-CoA + AMP + diphosphate. The enzyme catalyses (E)-cinnamate + ATP + CoA = (E)-cinnamoyl-CoA + AMP + diphosphate. It catalyses the reaction (E)-ferulate + ATP + CoA = (E)-feruloyl-CoA + AMP + diphosphate. It participates in phenylpropanoid metabolism; trans-cinnamate biosynthesis. The protein operates within phytoalexin biosynthesis; 3,4',5-trihydroxystilbene biosynthesis; 3,4',5-trihydroxystilbene from trans-4-coumarate: step 1/2. Its function is as follows. Catalyzes the formation of CoA esters of trans-cinnamic acid, 4-coumaric acid, ferulic acid, benzoic acid and caffeic acid. The chain is 4-coumarate:CoA ligase 1 from Petunia hybrida (Petunia).